We begin with the raw amino-acid sequence, 467 residues long: Transcription factor bHLH3 (467 aa).

In terms of domain architecture, bHLH spans 316–365 (EEALNHVEAERQRREKLNQRFYALRAVVPNISKMDKASLLADAITYITDM).

In terms of assembly, homodimer.

Its subcellular location is the nucleus. The chain is Transcription factor bHLH3 (BHLH3) from Arabidopsis thaliana (Mouse-ear cress).